The following is an 83-amino-acid chain: MKTVFAILFLAFIALTYARSYEDVKEEIKNEVEKEILEDLEKETDELNERKINDAKPWRWVRDIRWRKLVPFIPVVVAAVGKK.

A signal peptide spans 1–18 (MKTVFAILFLAFIALTYA). The propeptide occupies 19–55 (RSYEDVKEEIKNEVEKEILEDLEKETDELNERKINDA). A Valine amide modification is found at V80.

It belongs to the arminin family. Expressed in entodermal epithelium along the body column.

It is found in the secreted. The protein resides in the target cell membrane. Functionally, antimicrobial peptide with a broad-spectrum antimicrobial activity. Keeps its antibacterial activity under a wide range of salt concentrations that mimic physiological conditions of human blood, which is surprising, since Hydra is an obligate freshwater animal with nearly no salt tolerance. Does not affect red blood cells. In Hydra vulgaris (Hydra), this protein is Arminin 4364.